The following is an 80-amino-acid chain: UPF0057 membrane protein ZK632.10 (80 aa).

2 consecutive transmembrane segments (helical) span residues 4-24 and 32-52; these read ILLAILAIFLPPIAVLLDVGC and ILLTCLGIIPGIIHAWYIILC.

The protein belongs to the UPF0057 (PMP3) family.

The protein localises to the membrane. In Caenorhabditis elegans, this protein is UPF0057 membrane protein ZK632.10.